A 376-amino-acid polypeptide reads, in one-letter code: Putative endoglucanase type K (376 aa).

The N-terminal stretch at 1-18 (MRSYTLLALAGPLAVSAA) is a signal peptide. Positions 19-308 (SGSGHSTRYW…ATKPAQPVNK (290 aa)) are catalytic. Aspartate 29 functions as the Nucleophile in the catalytic mechanism. Aspartate 140 serves as the catalytic Proton donor. The segment at 229 to 332 (AFKGDTSASK…SCPAKTDATA (104 aa)) is disordered. 2 stretches are compositionally biased toward low complexity: residues 235–258 (SASK…AQPQ) and 291–306 (KPVA…AQPV). The segment at 309 to 338 (PKTTQKVRGTKTRGSCPAKTDATAKASVVP) is linker. Residues 335-374 (SVVPAYYQCGGSKSAYPNGNLACATGSKCVKQNEYYSQCV) form the CBM1 domain.

It belongs to the glycosyl hydrolase 45 (cellulase K) family.

The enzyme catalyses Endohydrolysis of (1-&gt;4)-beta-D-glucosidic linkages in cellulose, lichenin and cereal beta-D-glucans.. This is Putative endoglucanase type K from Fusarium oxysporum (Fusarium vascular wilt).